The chain runs to 337 residues: Glyceraldehyde-3-phosphate dehydrogenase 3 (337 aa).

Residues 12–13 and Lys-80 contribute to the NAD(+) site; that span reads RM. D-glyceraldehyde 3-phosphate contacts are provided by residues 152 to 154 and Thr-183; that span reads SCT. Catalysis depends on Cys-153, which acts as the Nucleophile. Asn-184 serves as a coordination point for NAD(+). D-glyceraldehyde 3-phosphate is bound by residues Arg-198, 211–212, and Arg-234; that span reads TG. Residue Asn-317 participates in NAD(+) binding.

This sequence belongs to the glyceraldehyde-3-phosphate dehydrogenase family. As to quaternary structure, homotetramer.

The protein localises to the cytoplasm. It catalyses the reaction D-glyceraldehyde 3-phosphate + phosphate + NAD(+) = (2R)-3-phospho-glyceroyl phosphate + NADH + H(+). Its pathway is carbohydrate degradation; glycolysis; pyruvate from D-glyceraldehyde 3-phosphate: step 1/5. It participates in carbohydrate biosynthesis; gluconeogenesis. Functionally, catalyzes the oxidative phosphorylation of glyceraldehyde 3-phosphate (G3P) to 1,3-bisphosphoglycerate (BPG) using the cofactor NAD. The first reaction step involves the formation of a hemiacetal intermediate between G3P and a cysteine residue, and this hemiacetal intermediate is then oxidized to a thioester, with concomitant reduction of NAD to NADH. The reduced NADH is then exchanged with the second NAD, and the thioester is attacked by a nucleophilic inorganic phosphate to produce BPG. The chain is Glyceraldehyde-3-phosphate dehydrogenase 3 (gap3) from Nostoc sp. (strain PCC 7120 / SAG 25.82 / UTEX 2576).